A 1231-amino-acid chain; its full sequence is Cohesin subunit SA-2 (1231 aa).

Met-1 is subject to N-acetylmethionine. Positions 1–75 (MIAAPEIPTD…GSNRMNGHHQ (75 aa)) are disordered. The segment covering 36-48 (KQGKGKTCKKGKK) has biased composition (basic residues). Residues 293–378 (FVHRYRDAIA…SRFKDRIVSM (86 aa)) form the SCD domain. Lys-607 bears the N6-acetyllysine mark. A phosphoserine mark is found at Ser-1058, Ser-1061, Ser-1064, and Ser-1065. A disordered region spans residues 1062–1087 (GMSSRGSTVRSKKSKPSTGKRKVVEG). Over residues 1071 to 1082 (RSKKSKPSTGKR) the composition is skewed to basic residues. A Phosphothreonine modification is found at Thr-1112. A phosphoserine mark is found at Ser-1177 and Ser-1178.

The protein belongs to the SCC3 family. As to quaternary structure, interacts directly with RAD21 in cohesin complex. Cohesin complexes are composed of a heterodimer between a SMC1 protein (SMC1A or SMC1B) and SMC3, which are attached via their hinge domain, and RAD21 which link them at their heads, and one STAG protein (STAG1, STAG2 or STAG3). In cohesin complexes, STAG2 is mutually exclusive with STAG1 and STAG3. Post-translationally, phosphorylated by PLK1. The large dissociation of cohesin from chromosome arms during prophase is partly due to its phosphorylation.

The protein resides in the nucleus. Its subcellular location is the chromosome. The protein localises to the centromere. In terms of biological role, component of cohesin complex, a complex required for the cohesion of sister chromatids after DNA replication. The cohesin complex apparently forms a large proteinaceous ring within which sister chromatids can be trapped. At anaphase, the complex is cleaved and dissociates from chromatin, allowing sister chromatids to segregate. The cohesin complex may also play a role in spindle pole assembly during mitosis. This chain is Cohesin subunit SA-2 (Stag2), found in Mus musculus (Mouse).